Consider the following 340-residue polypeptide: Thylakoidal processing peptidase 1, chloroplastic (340 aa).

The N-terminal 52 residues, M1–P52, are a transit peptide targeting the chloroplast. The chain crosses the membrane as a helical span at residues E155–A175. Topologically, residues E176–S340 are lumenal, thylakoid. Residue S184 is part of the active site.

It belongs to the peptidase S26 family.

The protein resides in the plastid. It is found in the chloroplast thylakoid membrane. The catalysed reaction is Cleavage of hydrophobic, N-terminal signal or leader sequences from secreted and periplasmic proteins.. Cleaves the thylakoid-transfer domain from a chloroplast protein. The polypeptide is Thylakoidal processing peptidase 1, chloroplastic (TPP1) (Arabidopsis thaliana (Mouse-ear cress)).